The chain runs to 845 residues: Protein P (845 aa).

Residues 1–179 (MPLSYQHFRK…FCGSPYSWEQ (179 aa)) form a terminal protein domain (TP) region. Residues 180–348 (ELQHGRLVIK…YCLSHLVNLR (169 aa)) form a spacer region. Positions 226-252 (GLQPRQGRLASSQPSRSGSIRAKAHPS) are disordered. A compositionally biased stretch (polar residues) spans 234–243 (LASSQPSRSG). The polymerase/reverse transcriptase domain (RT) stretch occupies residues 349-692 (EDWGPCDEHG…YMNLYPVARQ (344 aa)). The Reverse transcriptase domain occupies 359–602 (EHHIRIPRTP…YSLNFMGYII (244 aa)). Residues aspartate 431, aspartate 553, and aspartate 554 each coordinate Mg(2+). The rnaseH domain (RH) stretch occupies residues 693-845 (RPGLCQVFAD…SPLHVAWRPP (153 aa)).

The protein belongs to the hepadnaviridae P protein family.

It carries out the reaction DNA(n) + a 2'-deoxyribonucleoside 5'-triphosphate = DNA(n+1) + diphosphate. The catalysed reaction is Endonucleolytic cleavage to 5'-phosphomonoester.. With respect to regulation, activated by host HSP70 and HSP40 in vitro to be able to bind the epsilon loop of the pgRNA. Because deletion of the RNase H region renders the protein partly chaperone-independent, the chaperones may be needed indirectly to relieve occlusion of the RNA-binding site by this domain. Inhibited by several reverse-transcriptase inhibitors: Lamivudine, Adefovir and Entecavir. Its function is as follows. Multifunctional enzyme that converts the viral RNA genome into dsDNA in viral cytoplasmic capsids. This enzyme displays a DNA polymerase activity that can copy either DNA or RNA templates, and a ribonuclease H (RNase H) activity that cleaves the RNA strand of RNA-DNA heteroduplexes in a partially processive 3'- to 5'-endonucleasic mode. Neo-synthesized pregenomic RNA (pgRNA) are encapsidated together with the P protein, and reverse-transcribed inside the nucleocapsid. Initiation of reverse-transcription occurs first by binding the epsilon loop on the pgRNA genome, and is initiated by protein priming, thereby the 5'-end of (-)DNA is covalently linked to P protein. Partial (+)DNA is synthesized from the (-)DNA template and generates the relaxed circular DNA (RC-DNA) genome. After budding and infection, the RC-DNA migrates in the nucleus, and is converted into a plasmid-like covalently closed circular DNA (cccDNA). The activity of P protein does not seem to be necessary for cccDNA generation, and is presumably released from (+)DNA by host nuclear DNA repair machinery. This is Protein P from Homo sapiens (Human).